The chain runs to 419 residues: Putative L-glutamine:3-amino-2,3-dideoxy-scyllo-inosose aminotransferase (419 aa).

Residue Lys-199 is modified to N6-(pyridoxal phosphate)lysine.

The protein belongs to the DegT/DnrJ/EryC1 family. L-glutamine:2-deoxy-scyllo-inosose/scyllo-inosose aminotransferase subfamily. It depends on pyridoxal 5'-phosphate as a cofactor.

It carries out the reaction 3-amino-2,3-dideoxy-scyllo-inosose + L-glutamine = 2-deoxystreptamine + 2-oxoglutaramate. The protein operates within metabolic intermediate biosynthesis; 2-deoxystreptamine biosynthesis; 2-deoxystreptamine from D-glucose 6-phosphate: step 4/4. It participates in antibiotic biosynthesis; kanamycin biosynthesis. Its function is as follows. Catalyzes the transamination of 3-amino-2,3-dideoxy-scyllo-inosose (amino-DOI) into 2-deoxystreptamine (DOS). The polypeptide is Putative L-glutamine:3-amino-2,3-dideoxy-scyllo-inosose aminotransferase (kanD) (Streptomyces kanamyceticus).